The following is a 252-amino-acid chain: Thiazole synthase (252 aa).

The active-site Schiff-base intermediate with DXP is Lys98. 1-deoxy-D-xylulose 5-phosphate-binding positions include Gly159, 185 to 186, and 207 to 208; these read AG and AT.

This sequence belongs to the ThiG family. As to quaternary structure, homotetramer. Forms heterodimers with either ThiH or ThiS.

Its subcellular location is the cytoplasm. The enzyme catalyses [ThiS sulfur-carrier protein]-C-terminal-Gly-aminoethanethioate + 2-iminoacetate + 1-deoxy-D-xylulose 5-phosphate = [ThiS sulfur-carrier protein]-C-terminal Gly-Gly + 2-[(2R,5Z)-2-carboxy-4-methylthiazol-5(2H)-ylidene]ethyl phosphate + 2 H2O + H(+). It functions in the pathway cofactor biosynthesis; thiamine diphosphate biosynthesis. In terms of biological role, catalyzes the rearrangement of 1-deoxy-D-xylulose 5-phosphate (DXP) to produce the thiazole phosphate moiety of thiamine. Sulfur is provided by the thiocarboxylate moiety of the carrier protein ThiS. In vitro, sulfur can be provided by H(2)S. The polypeptide is Thiazole synthase (Mycolicibacterium smegmatis (strain ATCC 700084 / mc(2)155) (Mycobacterium smegmatis)).